We begin with the raw amino-acid sequence, 401 residues long: Phosphoglycerate kinase (401 aa).

Residues 20 to 22 (DFN), R35, 58 to 61 (HLGR), R117, and R154 contribute to the substrate site. Residues K204, G298, E329, and 358 to 361 (GGDS) each bind ATP.

This sequence belongs to the phosphoglycerate kinase family. In terms of assembly, monomer.

Its subcellular location is the cytoplasm. The enzyme catalyses (2R)-3-phosphoglycerate + ATP = (2R)-3-phospho-glyceroyl phosphate + ADP. The protein operates within carbohydrate degradation; glycolysis; pyruvate from D-glyceraldehyde 3-phosphate: step 2/5. In Bifidobacterium longum subsp. infantis (strain ATCC 15697 / DSM 20088 / JCM 1222 / NCTC 11817 / S12), this protein is Phosphoglycerate kinase.